Consider the following 363-residue polypeptide: Type-1 angiotensin II receptor B (363 aa).

The Extracellular segment spans residues 1–27 (MLSNISAGENSEVEKIVVKCSKSGMHN). A glycan (N-linked (GlcNAc...) asparagine) is linked at asparagine 4. 2 disulfide bridges follow: cysteine 20–cysteine 274 and cysteine 103–cysteine 182. Residues 28–57 (YIFITIPIIYSTIFVVGVFGNSLVVIVIYS) form a helical membrane-spanning segment. Residues 58-63 (YMKMKT) lie on the Cytoplasmic side of the membrane. A helical transmembrane segment spans residues 64-91 (MASVFLMNLALSDLCFVITLPLWAVYTA). At 92–100 (MHYHWPFGD) the chain is on the extracellular side. The helical transmembrane segment at 101-127 (LLCKIASTAITLNLYTTVFLLTCLSID) threads the bilayer. At 128–143 (RYSAIVHPMKSRIRRT) the chain is on the cytoplasmic side. Residues 144–167 (VMVARLTCVGIWLVAFLASLPSVI) form a helical membrane-spanning segment. The Extracellular segment spans residues 168 to 192 (YRQIFIFPDTNQTVCALVYHSGHIY). Residue arginine 169 participates in angiotensin II binding. An N-linked (GlcNAc...) asparagine glycan is attached at asparagine 178. Residues tyrosine 186 and lysine 201 each contribute to the angiotensin II site. A helical transmembrane segment spans residues 193–218 (FMVGMSLVKNIVGFFIPFVIILTSYT). The Cytoplasmic portion of the chain corresponds to 219–239 (LIGKTLKEVYRAQRARNDDIF). The chain crosses the membrane as a helical span at residues 240–268 (KMIVAVVLLFFFCWIPHQVFTFLDVLIQM). The Extracellular segment spans residues 269–278 (DVIQNCKMYD). A helical membrane pass occupies residues 279–304 (IVDTGMPITICIAYFNSCLNPFLYGF). Over 305–363 (FGKKFRKHFLQLIKYIPPKMRTHASVNTKSSTVSQRLSDTKCASNKIALWIFDIEEHCK) the chain is Cytoplasmic. 2 S-palmitoyl cysteine lipidation sites follow: cysteine 346 and cysteine 362.

Belongs to the G-protein coupled receptor 1 family. C-terminal Ser or Thr residues may be phosphorylated. As to expression, heart membranes, follicular oocytes.

The protein resides in the cell membrane. Functionally, receptor for angiotensin II, a vasoconstricting peptide, which acts as a key regulator of blood pressure and sodium retention by the kidney. The activated receptor in turn couples to G-alpha proteins G(q) (GNAQ, GNA11, GNA14 or GNA15) and thus activates phospholipase C and increases the cytosolic Ca(2+) concentrations, which in turn triggers cellular responses such as stimulation of protein kinase C. The sequence is that of Type-1 angiotensin II receptor B (agtr1-b) from Xenopus laevis (African clawed frog).